Reading from the N-terminus, the 426-residue chain is 6-Hydroxy-7-prenyldeoxybrevianamide E synthase notC (426 aa).

Residue glutamate 94 participates in substrate binding. Dimethylallyl diphosphate is bound by residues arginine 105, lysine 191, and tyrosine 193. Tyrosine 195 provides a ligand contact to substrate. Dimethylallyl diphosphate contacts are provided by lysine 267, tyrosine 269, glutamine 352, tyrosine 354, tyrosine 418, and tyrosine 422.

This sequence belongs to the tryptophan dimethylallyltransferase family.

The enzyme catalyses 6-hydroxydeoxybrevianamide E + dimethylallyl diphosphate = notoamide S + diphosphate. It functions in the pathway alkaloid biosynthesis. Its activity is regulated as follows. Addition of 5 mM Mg(2+), Ca(2+) or Mn(2+) slightly enhances catalysis (about 100-120%). Significant reduction of enzyme activity (2%-35%) is observed with Cu(2+), Zn(2+), Fe(2+), or Sn(2+) (5 mM). In terms of biological role, prenyltransferase; part of the gene cluster that mediates the biosynthesis of notoamide, a fungal indole alkaloid that belongs to a family of natural products containing a characteristic bicyclo[2.2.2]diazaoctane core. The first step of notoamide biosynthesis involves coupling of L-proline and L-tryptophan by the bimodular NRPS notE, to produce cyclo-L-tryptophan-L-proline called brevianamide F. The reverse prenyltransferase notF then acts as a deoxybrevianamide E synthase and converts brevianamide F to deoxybrevianamide E via reverse prenylation at C-2 of the indole ring leading to the bicyclo[2.2.2]diazaoctane core. Deoxybrevianamide E is further hydroxylated at C-6 of the indole ring, likely catalyzed by the cytochrome P450 monooxygenase notG, to yield 6-hydroxy-deoxybrevianamide E. 6-hydroxy-deoxybrevianamide E is a specific substrate of the prenyltransferase notC for normal prenylation at C-7 to produce 6-hydroxy-7-prenyl-deoxybrevianamide, also called notoamide S. As the proposed pivotal branching point in notoamide biosynthesis, notoamide S can be diverted to notoamide E through an oxidative pyran ring closure putatively catalyzed by either notH cytochrome P450 monooxygenase or the notD FAD-linked oxidoreductase. This step would be followed by an indole 2,3-epoxidation-initiated pinacol-like rearrangement catalyzed by the notB FAD-dependent monooxygenase leading to the formation of notoamide C and notoamide D. On the other hand notoamide S is converted to notoamide T by notH (or notD), a bifunctional oxidase that also functions as the intramolecular Diels-Alderase responsible for generation of (+)-notoamide T. To generate antipodal (-)-notoaminide T, notH' (or notD') in Aspergillus versicolor is expected to catalyze a Diels-Alder reaction leading to the opposite stereochemistry. The remaining oxidoreductase notD (or notH) likely catalyzes the oxidative pyran ring formation to yield (+)-stephacidin A. The FAD-dependent monooxygenase notI is highly similar to notB and is predicted to catalyze a similar conversion from (+)-stephacidin A to (-)-notoamide B via the 2,3-epoxidation of (+)-stephacidin A followed by a pinacol-type rearrangement. Finally, it remains unclear which enzyme could be responsible for the final hydroxylation steps leading to notoamide A and sclerotiamide. The protein is 6-Hydroxy-7-prenyldeoxybrevianamide E synthase notC of Aspergillus sp. (strain MF297-2).